The chain runs to 730 residues: Elongation factor 2 (730 aa).

The tr-type G domain maps to 19 to 260 (QRIRNIGIVA…MVIHFLPNPL (242 aa)). GTP-binding positions include 28–35 (AHIDHGKT), 94–98 (DTPGH), and 148–151 (NKVD). At histidine 596 the chain carries Diphthamide.

Belongs to the TRAFAC class translation factor GTPase superfamily. Classic translation factor GTPase family. EF-G/EF-2 subfamily.

It localises to the cytoplasm. Its function is as follows. Catalyzes the GTP-dependent ribosomal translocation step during translation elongation. During this step, the ribosome changes from the pre-translocational (PRE) to the post-translocational (POST) state as the newly formed A-site-bound peptidyl-tRNA and P-site-bound deacylated tRNA move to the P and E sites, respectively. Catalyzes the coordinated movement of the two tRNA molecules, the mRNA and conformational changes in the ribosome. The chain is Elongation factor 2 from Methanosarcina mazei (strain ATCC BAA-159 / DSM 3647 / Goe1 / Go1 / JCM 11833 / OCM 88) (Methanosarcina frisia).